The chain runs to 504 residues: Subtilisin-like protease 1 (504 aa).

An N-terminal signal peptide occupies residues 1–19 (MGVFRFISISLAAVSAANA). The propeptide occupies 20 to 116 (AQILSMPHAQ…VEPDTIVSVH (97 aa)). In terms of domain architecture, Inhibitor I9 spans 34–116 (SYIVMMKDDT…VEPDTIVSVH (83 aa)). The 275-residue stretch at 126 to 400 (SWGLARISNP…NVLINNGGAK (275 aa)) folds into the Peptidase S8 domain. Residues aspartate 158 and histidine 190 each act as charge relay system in the active site. Positions 172-198 (AIWGSNQVNDGDDRDGSGHGTHTSGTM) are disordered. Residues asparagine 233 and asparagine 251 are each glycosylated (N-linked (GlcNAc...) asparagine). Residues 282-294 (NDNQDAQSSSPAS) are compositionally biased toward polar residues. Residues 282–312 (NDNQDAQSSSPASEPSVCTVGSSAEDDSRSS) form a disordered region. Serine 345 functions as the Charge relay system in the catalytic mechanism. Residues 378 to 394 (TSSITDAGPGTPTNVLI) are compositionally biased toward polar residues. The segment at 378-483 (TSSITDAGPG…YPGGDNFDFD (106 aa)) is disordered. Composition is skewed to pro residues over residues 405-449 (NPNP…PGQP) and 457-473 (APAPAPMPPTPQHPHTP).

The protein belongs to the peptidase S8 family.

Its subcellular location is the secreted. In terms of biological role, secreted subtilisin-like serine protease with keratinolytic activity that contributes to pathogenicity. In Trichophyton rubrum (Athlete's foot fungus), this protein is Subtilisin-like protease 1 (SUB1).